Reading from the N-terminus, the 302-residue chain is Rab effector Noc2 (302 aa).

Residues 41–158 (QRRSQCLSPG…KRSGAWFYKG (118 aa)) form the RabBD domain. The FYVE-type zinc-finger motif lies at 89 to 146 (GNGLSQCLLCGEVLGFLGSSSVFCKDCRKKVCTKCGIEASPGQKRPLWLCKICSEQRE). Residues Cys95, Cys98, Cys112, Cys115, Cys120, Cys123, Cys138, and Cys141 each contribute to the Zn(2+) site. The interval 174–302 (DPHFRPLPVE…KRHTWATPRY (129 aa)) is disordered. Residues 185–197 (TETQPPSAETSRV) are compositionally biased toward polar residues. Ser248 carries the post-translational modification Phosphoserine. Over residues 258–269 (SHLSGSQSSLGS) the composition is skewed to low complexity.

As to quaternary structure, recruited to dense-core vesicles through specific interaction with RAB27A in endocrine cells. Interacts with RAB3A, RAB3B, RAB3C and RAB3D. Interacts with ZYX. As to expression, highly expressed in pancreatic islets. High to moderate expression in adrenal gland, pituitary gland and ovary.

Its subcellular location is the cytoplasm. The protein localises to the cytoplasmic vesicle. It localises to the secretory vesicle membrane. Rab GTPase effector involved in the late steps of regulated exocytosis, both in endocrine and exocrine cells. Regulates the exocytosis of dense-core vesicles in neuroendocrine cells through interaction with RAB27A. Acts as a potential RAB3B effector protein in epithelial cells. This is Rab effector Noc2 (Rph3al) from Mus musculus (Mouse).